The chain runs to 217 residues: GTP cyclohydrolase 1 (217 aa).

Residues Cys109, His112, and Cys180 each coordinate Zn(2+).

Belongs to the GTP cyclohydrolase I family. As to quaternary structure, toroid-shaped homodecamer, composed of two pentamers of five dimers.

It catalyses the reaction GTP + H2O = 7,8-dihydroneopterin 3'-triphosphate + formate + H(+). It functions in the pathway cofactor biosynthesis; 7,8-dihydroneopterin triphosphate biosynthesis; 7,8-dihydroneopterin triphosphate from GTP: step 1/1. The sequence is that of GTP cyclohydrolase 1 from Vibrio vulnificus (strain CMCP6).